A 119-amino-acid chain; its full sequence is Fluoride-specific ion channel FluC 2 (119 aa).

4 helical membrane-spanning segments follow: residues 1–21 (MITVLTAGFGAIWGAILRYGI), 33–53 (FPYATLLINLTGAFLLGFIFS), 56–76 (FSPFIYALIGTGVLGGYTTFS), and 93–113 (VFTLYALLSYGGGLILVFLGY). Residues Gly-70 and Thr-73 each contribute to the Na(+) site.

The protein belongs to the fluoride channel Fluc/FEX (TC 1.A.43) family.

It localises to the cell membrane. The catalysed reaction is fluoride(in) = fluoride(out). With respect to regulation, na(+) is not transported, but it plays an essential structural role and its presence is essential for fluoride channel function. Fluoride-specific ion channel. Important for reducing fluoride concentration in the cell, thus reducing its toxicity. The sequence is that of Fluoride-specific ion channel FluC 2 from Lactobacillus johnsonii (strain CNCM I-12250 / La1 / NCC 533).